A 154-amino-acid polypeptide reads, in one-letter code: TSET complex member tstD (154 aa).

The protein belongs to the adaptor complexes small subunit family. As to quaternary structure, component of the TSET complex, a heterohexamer composed of tstA, tstB, tstC, tstD, tstE and tstF, which may act in plasma membrane turnover. tstA, tstB, tstC and tstD are likely to be the core complex members with tstE and tstF acting as associated scaffold proteins.

It localises to the cell membrane. The protein localises to the cytoplasm. The protein is TSET complex member tstD of Dictyostelium discoideum (Social amoeba).